The sequence spans 323 residues: Vertebrate ancient opsin (323 aa).

The Extracellular portion of the chain corresponds to 1–38; that stretch reads MDTLRIAVNGVSYNEASEIYKPHADPFTGPITNLAPWN. Residues 39–63 form a helical membrane-spanning segment; the sequence is FAVLATLMFVITSLSLFENFTVMLA. Residues 64-75 are Cytoplasmic-facing; sequence TYKFKQLRQPLN. Residues 76–100 form a helical membrane-spanning segment; that stretch reads YIIVNLSLADFLVSLTGGTISFLTN. At 101–115 the chain is on the extracellular side; that stretch reads ARGYFFLGNWACVLE. An intrachain disulfide couples Cys112 to Cys189. A helical transmembrane segment spans residues 116–135; that stretch reads GFAVTYFGIVAMWSLAVLSF. Residues 136–154 are Cytoplasmic-facing; it reads ERYFVICRPLGNVRLRGKH. A helical membrane pass occupies residues 155 to 178; sequence AALGLLFVWTFSFIWTIPPVFGWC. The Extracellular segment spans residues 179-202; it reads SYTVSKIGTTCEPNWYSNNIWNHT. Asn200 carries N-linked (GlcNAc...) asparagine glycosylation. A helical membrane pass occupies residues 203 to 230; the sequence is YIITFFVTCFIMPLGMIIYCYGKLLQKL. Residues 231–250 are Cytoplasmic-facing; the sequence is RKVSHDRLGNAKKPERQVSR. Residues 251-274 form a helical membrane-spanning segment; sequence MVVVMIVAYLVGWTPYAAFSIIVT. Topologically, residues 275-282 are extracellular; the sequence is ACPTIYLD. Residues 283–307 form a helical membrane-spanning segment; that stretch reads PRLAAAPAFFSKTAAVYNPVIYVFM. An N6-(retinylidene)lysine modification is found at Lys294. The Cytoplasmic segment spans residues 308 to 323; the sequence is NKQVSTQLNWGFWSRA.

Belongs to the G-protein coupled receptor 1 family. Opsin subfamily. Post-translationally, phosphorylated on some or all of the serine and threonine residues present in the C-terminal region.

It is found in the membrane. This Salmo salar (Atlantic salmon) protein is Vertebrate ancient opsin.